Reading from the N-terminus, the 357-residue chain is Protein RecA (357 aa).

71-78 (GPESSGKT) contacts ATP.

This sequence belongs to the RecA family.

Its subcellular location is the cytoplasm. Functionally, can catalyze the hydrolysis of ATP in the presence of single-stranded DNA, the ATP-dependent uptake of single-stranded DNA by duplex DNA, and the ATP-dependent hybridization of homologous single-stranded DNAs. It interacts with LexA causing its activation and leading to its autocatalytic cleavage. The chain is Protein RecA from Ehrlichia canis (strain Jake).